Reading from the N-terminus, the 471-residue chain is Regulator of microtubule dynamics protein 3 (471 aa).

Over 1 to 9 (MSSLGTLGG) the chain is Mitochondrial intermembrane. Residues 10–32 (ARAGLGLLLGTAAGLGFLCALYS) traverse the membrane as a helical segment. Residues 33–471 (QRWKRTQRRG…LEELEVILGE (439 aa)) are Cytoplasmic-facing. Positions 39-70 (QRRGQSQSQSNSLDYTQTSEPGRQVRPLRAAP) are disordered. The segment covering 41-50 (RGQSQSQSNS) has biased composition (low complexity). S44, S46, S50, and S57 each carry phosphoserine. A coiled-coil region spans residues 90–123 (LDRLEFVLTSLVALRREVEELRSSLQGLAGQIVG). Positions 156–162 (VYFTAAS) match the FFAT motif. T159 is subject to Phosphothreonine. Residues 169–206 (AESEGGYTTANAESDYERDSERESDGDGEDEVSCETVK) form a disordered region. Residues S182, S192, S212, and S233 each carry the phosphoserine modification. Residues 183 to 193 (DYERDSERESD) show a composition bias toward basic and acidic residues.

This sequence belongs to the RMDN family. Interacts with PTPN2. Interacts with microtubules. Interacts with VAPB. Interacts (via FFAT motif) with MOSPD2 (via MSP domain). Interacts (via phosphorylated FFAT motif) with MOSPD2, VAPA and VAPB. Post-translationally, phosphorylation at Thr-160 of the FFAT motif activates interaction with MOSPD2, VAPA and VAPB.

It is found in the mitochondrion outer membrane. The protein resides in the cytoplasm. The protein localises to the nucleus. Its subcellular location is the cytoskeleton. It localises to the spindle. It is found in the spindle pole. In terms of biological role, involved in cellular calcium homeostasis regulation. May participate in differentiation and apoptosis of keratinocytes. Overexpression induces apoptosis. The protein is Regulator of microtubule dynamics protein 3 of Bos taurus (Bovine).